The following is a 404-amino-acid chain: Dihydrosphingosine 1-phosphate phosphatase YSR3 (404 aa).

Residues 1-86 (MTIIQTVTEL…PFRDVYFKYT (86 aa)) are Lumenal-facing. An N-linked (GlcNAc...) asparagine glycan is attached at asparagine 62. A helical transmembrane segment spans residues 87 to 107 (SLMGSHMFYVIVLPMPVWLGY). The Cytoplasmic portion of the chain corresponds to 108–113 (RDLTRD). A helical membrane pass occupies residues 114–134 (MIYVLGYSIYLSGYLKDYWCL). The interval 129–137 (KDYWCLPRP) is phosphatase sequence motif I. Residues 135 to 154 (PRPKSPPVDRITLSEYTTKE) are Lumenal-facing. The helical transmembrane segment at 155–176 (YGAPSSHSANATAVSLLFFWRI) threads the bilayer. The phosphatase sequence motif II stretch occupies residues 158–161 (PSSH). The active-site Proton donor is histidine 161. Residues 177 to 182 (CLSDTL) lie on the Cytoplasmic side of the membrane. Residues 183–203 (VWPTKLLLLSLVIFYYLTLVF) traverse the membrane as a helical segment. The Lumenal segment spans residues 204-215 (GRVYCGMHGMLD). The tract at residues 204–215 (GRVYCGMHGMLD) is phosphatase sequence motif III. Histidine 211 (nucleophile) is an active-site residue. A helical membrane pass occupies residues 216–236 (LFSGAAVGAICFFIRIWVVHA). Over 237 to 241 (LRNFQ) the chain is Cytoplasmic. Residues 242 to 262 (IGEHLWFPLLSVAWGLFILFN) traverse the membrane as a helical segment. Residues 263–319 (HVRPIDECPCFEDSVAFIGVVSGLDCSDWLTERYGWNLVCSRYASCGSKVFLRPLVG) lie on the Lumenal side of the membrane. A helical membrane pass occupies residues 320-340 (VASVIVWKDVISKTAVYTLLI). Residues 341 to 379 (KLLRFHDDRSEKVHFHNETSEEEECLLYSGVSKVEIVGR) are Cytoplasmic-facing. The helical transmembrane segment at 380 to 400 (FLIYAGIPTTVFLLCPVFFTW) threads the bilayer. The Lumenal segment spans residues 401 to 404 (TNLR).

The protein belongs to the type 2 lipid phosphate phosphatase family.

The protein localises to the endoplasmic reticulum membrane. The enzyme catalyses sphinganine 1-phosphate + H2O = sphinganine + phosphate. Its function is as follows. Dihydrosphingosine 1-phosphate phosphatase required for efficient ceramide synthesis from exogenous sphingoid bases. Involved in endocytosis and calcium-mediated signaling. The sequence is that of Dihydrosphingosine 1-phosphate phosphatase YSR3 from Saccharomyces cerevisiae (strain ATCC 204508 / S288c) (Baker's yeast).